We begin with the raw amino-acid sequence, 510 residues long: ATP synthase subunit alpha (510 aa).

Gly-169–Thr-176 contributes to the ATP binding site.

The protein belongs to the ATPase alpha/beta chains family. F-type ATPases have 2 components, CF(1) - the catalytic core - and CF(0) - the membrane proton channel. CF(1) has five subunits: alpha(3), beta(3), gamma(1), delta(1), epsilon(1). CF(0) has three main subunits: a(1), b(2) and c(9-12). The alpha and beta chains form an alternating ring which encloses part of the gamma chain. CF(1) is attached to CF(0) by a central stalk formed by the gamma and epsilon chains, while a peripheral stalk is formed by the delta and b chains.

It is found in the cell inner membrane. It carries out the reaction ATP + H2O + 4 H(+)(in) = ADP + phosphate + 5 H(+)(out). Its function is as follows. Produces ATP from ADP in the presence of a proton gradient across the membrane. The alpha chain is a regulatory subunit. The sequence is that of ATP synthase subunit alpha from Anaeromyxobacter sp. (strain K).